Reading from the N-terminus, the 118-residue chain is Ribonuclease P protein component (118 aa).

This sequence belongs to the RnpA family. In terms of assembly, consists of a catalytic RNA component (M1 or rnpB) and a protein subunit.

It catalyses the reaction Endonucleolytic cleavage of RNA, removing 5'-extranucleotides from tRNA precursor.. In terms of biological role, RNaseP catalyzes the removal of the 5'-leader sequence from pre-tRNA to produce the mature 5'-terminus. It can also cleave other RNA substrates such as 4.5S RNA. The protein component plays an auxiliary but essential role in vivo by binding to the 5'-leader sequence and broadening the substrate specificity of the ribozyme. This is Ribonuclease P protein component from Shewanella putrefaciens (strain CN-32 / ATCC BAA-453).